The sequence spans 407 residues: Argininosuccinate synthase (407 aa).

Residues A16–S24 and A44 contribute to the ATP site. L-citrulline contacts are provided by Y96 and S101. G126 provides a ligand contact to ATP. 3 residues coordinate L-aspartate: T128, N132, and D133. An L-citrulline-binding site is contributed by N132. L-citrulline is bound by residues R136, S185, S194, E270, and Y282.

Belongs to the argininosuccinate synthase family. Type 1 subfamily. As to quaternary structure, homotetramer.

The protein localises to the cytoplasm. It catalyses the reaction L-citrulline + L-aspartate + ATP = 2-(N(omega)-L-arginino)succinate + AMP + diphosphate + H(+). It functions in the pathway amino-acid biosynthesis; L-arginine biosynthesis; L-arginine from L-ornithine and carbamoyl phosphate: step 2/3. This chain is Argininosuccinate synthase, found in Shewanella oneidensis (strain ATCC 700550 / JCM 31522 / CIP 106686 / LMG 19005 / NCIMB 14063 / MR-1).